A 142-amino-acid polypeptide reads, in one-letter code: Prefoldin subunit alpha 2 (142 aa).

This sequence belongs to the prefoldin subunit alpha family. As to quaternary structure, heterohexamer of two alpha and four beta subunits.

The protein localises to the cytoplasm. Molecular chaperone capable of stabilizing a range of proteins. Seems to fulfill an ATP-independent, HSP70-like function in archaeal de novo protein folding. This chain is Prefoldin subunit alpha 2, found in Thermococcus kodakarensis (strain ATCC BAA-918 / JCM 12380 / KOD1) (Pyrococcus kodakaraensis (strain KOD1)).